The chain runs to 514 residues: 2,3-bisphosphoglycerate-independent phosphoglycerate mutase (514 aa).

Asp15 and Ser65 together coordinate Mn(2+). The Phosphoserine intermediate role is filled by Ser65. Residues His126, 156–157, Arg188, Arg194, 261–264, and Lys335 each bind substrate; these read RD and RADR. Mn(2+) contacts are provided by Asp403, His407, Asp444, His445, and His462.

The protein belongs to the BPG-independent phosphoglycerate mutase family. As to quaternary structure, monomer. Mn(2+) is required as a cofactor.

The catalysed reaction is (2R)-2-phosphoglycerate = (2R)-3-phosphoglycerate. The protein operates within carbohydrate degradation; glycolysis; pyruvate from D-glyceraldehyde 3-phosphate: step 3/5. In terms of biological role, catalyzes the interconversion of 2-phosphoglycerate and 3-phosphoglycerate. The protein is 2,3-bisphosphoglycerate-independent phosphoglycerate mutase of Syntrophotalea carbinolica (strain DSM 2380 / NBRC 103641 / GraBd1) (Pelobacter carbinolicus).